We begin with the raw amino-acid sequence, 330 residues long: Ferredoxin--NADP reductase (330 aa).

Positions 35, 43, 48, 90, 123, 285, and 326 each coordinate FAD.

The protein belongs to the ferredoxin--NADP reductase type 2 family. As to quaternary structure, homodimer. FAD is required as a cofactor.

The catalysed reaction is 2 reduced [2Fe-2S]-[ferredoxin] + NADP(+) + H(+) = 2 oxidized [2Fe-2S]-[ferredoxin] + NADPH. This chain is Ferredoxin--NADP reductase, found in Streptococcus pyogenes serotype M2 (strain MGAS10270).